The chain runs to 1295 residues: Phosphoribosylformylglycinamidine synthase (1295 aa).

The segment at 305–327 (WPGAATGSGGEIRDEGATGRGAK) is disordered. ATP contacts are provided by residues 307–318 (GAATGSGGEIRD), 386–388 (TGY), and alanine 678. Residues aspartate 679, glutamate 718, asparagine 722, and aspartate 884 each coordinate Mg(2+). Serine 886 contributes to the ATP binding site. The region spanning 1042–1295 (VAVLREQGVN…IFRNARKQLG (254 aa)) is the Glutamine amidotransferase type-1 domain. Cysteine 1135 (nucleophile) is an active-site residue. Active-site residues include histidine 1260 and glutamate 1262.

The protein in the N-terminal section; belongs to the FGAMS family. Monomer.

It localises to the cytoplasm. The enzyme catalyses N(2)-formyl-N(1)-(5-phospho-beta-D-ribosyl)glycinamide + L-glutamine + ATP + H2O = 2-formamido-N(1)-(5-O-phospho-beta-D-ribosyl)acetamidine + L-glutamate + ADP + phosphate + H(+). Its pathway is purine metabolism; IMP biosynthesis via de novo pathway; 5-amino-1-(5-phospho-D-ribosyl)imidazole from N(2)-formyl-N(1)-(5-phospho-D-ribosyl)glycinamide: step 1/2. Its function is as follows. Phosphoribosylformylglycinamidine synthase involved in the purines biosynthetic pathway. Catalyzes the ATP-dependent conversion of formylglycinamide ribonucleotide (FGAR) and glutamine to yield formylglycinamidine ribonucleotide (FGAM) and glutamate. This is Phosphoribosylformylglycinamidine synthase from Salmonella typhi.